A 964-amino-acid polypeptide reads, in one-letter code: DNA mismatch repair protein MSH2 (964 aa).

688 to 695 (GPNMGGKS) provides a ligand contact to ATP. Residues 851–964 (DQSFGIHVAE…YLKYIKALLL (114 aa)) are interaction with MSH6.

Belongs to the DNA mismatch repair MutS family. As to quaternary structure, heterodimer consisting of MSH2-MSH6 (MutS alpha) or MSH2-MSH3 (MutS beta). Both heterodimers form a ternary complex with MutL alpha (MLH1-PMS1). MutS beta also forms a ternary complex with MutL beta (MLH1-MLH3), and possibly with a MLH1-MLH2 heterodimer. Both heterodimers interact with proliferating cell nuclear antigen (PCNA/POL30). This interaction is disrupted upon binding of the MutS heterodimers to mismatch DNA. Interacts with SAW1.

The protein resides in the nucleus. Its activity is regulated as follows. Inhibited by Cd(2+). Its function is as follows. Component of the post-replicative DNA mismatch repair system (MMR). Forms two different heterodimers: MutS alpha (MSH2-MSH6 heterodimer) and MutS beta (MSH2-MSH3 heterodimer), which bind to DNA mismatches thereby initiating DNA repair. MSH2 seems to act as a scaffold for the other MutS homologs that provide substrate-binding and substrate specificity. When bound, heterodimers bend the DNA helix and shield approximately 20 base pairs. MutS alpha acts mainly to repair base-base and single insertion-deletion mismatches that occur during replication, but can also repair longer insertion-deletion loops (IDLs), although with decreasing efficiency as the size of the extrahelical loop increases. MutS beta acts mainly to repair IDLs from 2 to 13 nucleotides in size, but can also repair base-base and single insertion-deletion mismatches. After mismatch binding, MutS alpha or beta form a ternary complex with a MutL heterodimer, which is thought to be responsible for directing the downstream MMR events, including strand discrimination, excision, and resynthesis. ATP binding and hydrolysis play a pivotal role in mismatch repair functions. Both subunits bind ATP, but with differing affinities, and their ATPase kinetics are also very different. MSH6 binds and hydrolyzes ATP rapidly, whereas MSH2 catalyzes ATP at a substantially slower rate. Binding to a mismatched base pair suppresses MSH6-catalyzed ATP hydrolysis, but not the activity of MSH2. ATP binding to both subunits is necessary to trigger a change in MutS alpha interaction with mismatched DNA, converting MutS alpha into a sliding clamp capable of hydrolysis-independent movement along DNA, and also facilitates formation of ternary complexes containing MutS and MutL proteins and the mismatch. MutS beta also has a role in regulation of heteroduplex formation during mitotic and meiotic recombination. MutS beta binds to DNA flap structures predicted to form during recombination, and is required for 3' non-homologous tail removal (NHTR). MutS beta-binding alters the DNA conformation of its substrate at the ds/ssDNA junction and may facilitate its recognition and/or cleavage by the downstream nucleotide excision repair (NER) RAD1-RAD10 endonuclease. The polypeptide is DNA mismatch repair protein MSH2 (MSH2) (Saccharomyces cerevisiae (strain ATCC 204508 / S288c) (Baker's yeast)).